Here is a 133-residue protein sequence, read N- to C-terminus: Nickel-responsive regulator (133 aa).

Positions 76, 87, 89, and 95 each coordinate Ni(2+).

The protein belongs to the transcriptional regulatory CopG/NikR family. In terms of assembly, homotetramer. It depends on Ni(2+) as a cofactor.

Functionally, transcriptional repressor of the nikABCDE operon. Is active in the presence of excessive concentrations of intracellular nickel. The polypeptide is Nickel-responsive regulator (Escherichia fergusonii (strain ATCC 35469 / DSM 13698 / CCUG 18766 / IAM 14443 / JCM 21226 / LMG 7866 / NBRC 102419 / NCTC 12128 / CDC 0568-73)).